The following is a 498-amino-acid chain: ATP synthase subunit beta, chloroplastic (498 aa).

An ATP-binding site is contributed by 172–179; sequence GGAGVGKT.

It belongs to the ATPase alpha/beta chains family. In terms of assembly, F-type ATPases have 2 components, CF(1) - the catalytic core - and CF(0) - the membrane proton channel. CF(1) has five subunits: alpha(3), beta(3), gamma(1), delta(1), epsilon(1). CF(0) has four main subunits: a(1), b(1), b'(1) and c(9-12).

The protein resides in the plastid. It is found in the chloroplast thylakoid membrane. It catalyses the reaction ATP + H2O + 4 H(+)(in) = ADP + phosphate + 5 H(+)(out). In terms of biological role, produces ATP from ADP in the presence of a proton gradient across the membrane. The catalytic sites are hosted primarily by the beta subunits. The sequence is that of ATP synthase subunit beta, chloroplastic from Aristolochia macrophylla (Dutchman's pipe vine).